The sequence spans 152 residues: Xanthine-guanine phosphoribosyltransferase (152 aa).

5-phospho-alpha-D-ribose 1-diphosphate-binding positions include 37–38 and 88–96; these read RG and DDLVDTGNT. Residue Asp89 participates in Mg(2+) binding. Positions 92 and 135 each coordinate guanine. The xanthine site is built by Asp92 and Ile135. Residues 92–96 and 134–135 contribute to the GMP site; these read DTGNT and WI.

This sequence belongs to the purine/pyrimidine phosphoribosyltransferase family. XGPT subfamily. Homotetramer. Mg(2+) is required as a cofactor.

The protein resides in the cell inner membrane. The enzyme catalyses GMP + diphosphate = guanine + 5-phospho-alpha-D-ribose 1-diphosphate. It catalyses the reaction XMP + diphosphate = xanthine + 5-phospho-alpha-D-ribose 1-diphosphate. It carries out the reaction IMP + diphosphate = hypoxanthine + 5-phospho-alpha-D-ribose 1-diphosphate. It functions in the pathway purine metabolism; GMP biosynthesis via salvage pathway; GMP from guanine: step 1/1. It participates in purine metabolism; XMP biosynthesis via salvage pathway; XMP from xanthine: step 1/1. Its function is as follows. Purine salvage pathway enzyme that catalyzes the transfer of the ribosyl-5-phosphate group from 5-phospho-alpha-D-ribose 1-diphosphate (PRPP) to the N9 position of the 6-oxopurines guanine and xanthine to form the corresponding ribonucleotides GMP (guanosine 5'-monophosphate) and XMP (xanthosine 5'-monophosphate), with the release of PPi. To a lesser extent, also acts on hypoxanthine. The polypeptide is Xanthine-guanine phosphoribosyltransferase (Actinobacillus succinogenes (strain ATCC 55618 / DSM 22257 / CCUG 43843 / 130Z)).